A 200-amino-acid chain; its full sequence is Large ribosomal subunit protein uL4 (200 aa).

The tract at residues Gly38–Arg73 is disordered.

This sequence belongs to the universal ribosomal protein uL4 family. As to quaternary structure, part of the 50S ribosomal subunit.

Its function is as follows. One of the primary rRNA binding proteins, this protein initially binds near the 5'-end of the 23S rRNA. It is important during the early stages of 50S assembly. It makes multiple contacts with different domains of the 23S rRNA in the assembled 50S subunit and ribosome. Forms part of the polypeptide exit tunnel. The chain is Large ribosomal subunit protein uL4 from Ectopseudomonas mendocina (strain ymp) (Pseudomonas mendocina).